The following is a 159-amino-acid chain: Cytochrome c-type biogenesis protein CcmE (159 aa).

Residues 1–7 (MTPRQRR) lie on the Cytoplasmic side of the membrane. The chain crosses the membrane as a helical; Signal-anchor for type II membrane protein span at residues 8 to 28 (LGMLLAALACAGIALALVLNA). Residues 29–159 (FRSNLVFFFS…LAEGERETQR (131 aa)) are Periplasmic-facing. Positions 123 and 127 each coordinate heme.

The protein belongs to the CcmE/CycJ family.

The protein resides in the cell inner membrane. Heme chaperone required for the biogenesis of c-type cytochromes. Transiently binds heme delivered by CcmC and transfers the heme to apo-cytochromes in a process facilitated by CcmF and CcmH. This is Cytochrome c-type biogenesis protein CcmE from Cupriavidus pinatubonensis (strain JMP 134 / LMG 1197) (Cupriavidus necator (strain JMP 134)).